We begin with the raw amino-acid sequence, 725 residues long: Ribosomal RNA large subunit methyltransferase K/L (725 aa).

In terms of domain architecture, THUMP spans 46 to 157 (VAYRLCLWSR…RGEAVLSLDL (112 aa)).

This sequence belongs to the methyltransferase superfamily. RlmKL family.

It is found in the cytoplasm. The catalysed reaction is guanosine(2445) in 23S rRNA + S-adenosyl-L-methionine = N(2)-methylguanosine(2445) in 23S rRNA + S-adenosyl-L-homocysteine + H(+). It carries out the reaction guanosine(2069) in 23S rRNA + S-adenosyl-L-methionine = N(2)-methylguanosine(2069) in 23S rRNA + S-adenosyl-L-homocysteine + H(+). Its function is as follows. Specifically methylates the guanine in position 2445 (m2G2445) and the guanine in position 2069 (m7G2069) of 23S rRNA. The protein is Ribosomal RNA large subunit methyltransferase K/L of Ectopseudomonas mendocina (strain ymp) (Pseudomonas mendocina).